The following is an 870-amino-acid chain: Radial spoke head 10 homolog B2 (870 aa).

A compositionally biased stretch (basic and acidic residues) spans 1–16 (MVKEKKKADKKGEKSA). The interval 1–44 (MVKEKKKADKKGEKSARSPSSLSDNLDFSKQDGNTTRQEMSPAG) is disordered. Residues 17-39 (RSPSSLSDNLDFSKQDGNTTRQE) show a composition bias toward polar residues. MORN repeat units follow at residues 86–108 (YEGE…GGCT), 109–131 (YRGM…DGLK), 132–154 (YEGD…DGSM), 155–177 (YEGE…TQPV), 179–201 (YIGH…QEGT), 204–226 (YEGD…SGNI), 227–249 (YEGQ…TTNE), 251–273 (YTGR…LKRI), 284–306 (YIGE…SGAM), and 307–329 (YDGE…NGRV). The disordered stretch occupies residues 674 to 704 (NKSPSAVMSHESDAAHSDSARSSSSKLELSP). The span at 683 to 692 (HESDAAHSDS) shows a compositional bias: basic and acidic residues. Over residues 693 to 703 (ARSSSSKLELS) the composition is skewed to low complexity. Residues 784–811 (KEKIRADRLRSTAQAQQRKMEDDELEAR) are a coiled coil. Residues 840–870 (VSSSHLILDPPKEDVTVSPSSKTITSKKKKK) form a disordered region.

In terms of assembly, interacts with RSPH6A. Does not appear to be part of the axonemal radial spoke complexes 1 or 2.

It is found in the cytoplasm. Its subcellular location is the cytoskeleton. It localises to the cilium axoneme. The protein localises to the cell projection. The protein resides in the cilium. It is found in the flagellum. Its function is as follows. May function as part of the axonemal radial spoke complex 3 (RS3). Radial spoke complexes are important for ciliary motility. This Homo sapiens (Human) protein is Radial spoke head 10 homolog B2 (RSPH10B2).